The chain runs to 331 residues: Cytosolic arginine sensor for mTORC1 subunit 1 (331 aa).

Ser-14 is subject to Phosphoserine. ACT domains are found at residues 72 to 137 (AEAT…HTLA) and 259 to 320 (GELW…DILQ). L-arginine-binding positions include 110–111 (SV), Gly-273, 279–280 (IV), and 299–303 (TFNFD).

This sequence belongs to the GATS family. Forms homodimers and heterodimers with CASTOR2. Interacts with the GATOR2 complex which is composed of MIOS, SEC13, SEH1L, WDR24 and WDR59; the interaction is negatively regulated by arginine. Interacts with TM4SF5; the interaction is positively regulated by leucine and is negatively regulated by arginine. Phosphorylation at Ser-14 by AKT1, promoting the interaction between CASTOR1 and RNF167. In terms of processing, ubiquitinated by RNF167 via 'Lys-29'-polyubiquitination, leading to its degradation, releasing the GATOR2 complex. Ubiquitination by RNF167 is promoted by phosphorylation at Ser-14 by AKT1.

It is found in the cytoplasm. Its subcellular location is the cytosol. Functionally, functions as an intracellular arginine sensor within the amino acid-sensing branch of the TORC1 signaling pathway. As a homodimer or a heterodimer with CASTOR2, binds and inhibits the GATOR subcomplex GATOR2 and thereby mTORC1. Binding of arginine to CASTOR1 allosterically disrupts the interaction of CASTOR1-containing dimers with GATOR2 which can in turn activate mTORC1 and the TORC1 signaling pathway. This chain is Cytosolic arginine sensor for mTORC1 subunit 1, found in Mus musculus (Mouse).